A 285-amino-acid chain; its full sequence is Pantothenate synthetase (285 aa).

30 to 37 (MGYLHAGH) is an ATP binding site. The active-site Proton donor is histidine 37. A (R)-pantoate-binding site is contributed by glutamine 61. A beta-alanine-binding site is contributed by glutamine 61. 147–150 (GQKD) is an ATP binding site. Residue glutamine 153 coordinates (R)-pantoate. ATP-binding positions include valine 176 and 184–187 (LSSR).

Belongs to the pantothenate synthetase family. As to quaternary structure, homodimer.

The protein resides in the cytoplasm. It catalyses the reaction (R)-pantoate + beta-alanine + ATP = (R)-pantothenate + AMP + diphosphate + H(+). It participates in cofactor biosynthesis; (R)-pantothenate biosynthesis; (R)-pantothenate from (R)-pantoate and beta-alanine: step 1/1. In terms of biological role, catalyzes the condensation of pantoate with beta-alanine in an ATP-dependent reaction via a pantoyl-adenylate intermediate. In Solidesulfovibrio magneticus (strain ATCC 700980 / DSM 13731 / RS-1) (Desulfovibrio magneticus), this protein is Pantothenate synthetase.